The chain runs to 293 residues: 4-diphosphocytidyl-2-C-methyl-D-erythritol kinase (293 aa).

Residue K16 is part of the active site. 99-109 (PMGAGLGGGSS) is a binding site for ATP. Residue D141 is part of the active site.

This sequence belongs to the GHMP kinase family. IspE subfamily.

The enzyme catalyses 4-CDP-2-C-methyl-D-erythritol + ATP = 4-CDP-2-C-methyl-D-erythritol 2-phosphate + ADP + H(+). It functions in the pathway isoprenoid biosynthesis; isopentenyl diphosphate biosynthesis via DXP pathway; isopentenyl diphosphate from 1-deoxy-D-xylulose 5-phosphate: step 3/6. In terms of biological role, catalyzes the phosphorylation of the position 2 hydroxy group of 4-diphosphocytidyl-2C-methyl-D-erythritol. The chain is 4-diphosphocytidyl-2-C-methyl-D-erythritol kinase from Burkholderia mallei (strain NCTC 10247).